Reading from the N-terminus, the 400-residue chain is Acetate kinase (400 aa).

Mg(2+) is bound at residue Asn-7. Lys-14 lines the ATP pocket. Arg-90 lines the substrate pocket. Asp-147 serves as the catalytic Proton donor/acceptor. Residues 207 to 211 (HLGNG), 282 to 284 (DFR), and 331 to 335 (GIGEN) contribute to the ATP site. Position 384 (Glu-384) interacts with Mg(2+).

It belongs to the acetokinase family. As to quaternary structure, homodimer. It depends on Mg(2+) as a cofactor. Mn(2+) is required as a cofactor.

The protein localises to the cytoplasm. The enzyme catalyses acetate + ATP = acetyl phosphate + ADP. It participates in metabolic intermediate biosynthesis; acetyl-CoA biosynthesis; acetyl-CoA from acetate: step 1/2. In terms of biological role, catalyzes the formation of acetyl phosphate from acetate and ATP. Can also catalyze the reverse reaction. The polypeptide is Acetate kinase (Thermoanaerobacterium thermosaccharolyticum (strain ATCC 7956 / DSM 571 / NCIMB 9385 / NCA 3814 / NCTC 13789 / WDCM 00135 / 2032) (Clostridium thermosaccharolyticum)).